A 180-amino-acid polypeptide reads, in one-letter code: ATP synthase subunit delta (180 aa).

The protein belongs to the ATPase delta chain family. In terms of assembly, F-type ATPases have 2 components, F(1) - the catalytic core - and F(0) - the membrane proton channel. F(1) has five subunits: alpha(3), beta(3), gamma(1), delta(1), epsilon(1). F(0) has three main subunits: a(1), b(2) and c(10-14). The alpha and beta chains form an alternating ring which encloses part of the gamma chain. F(1) is attached to F(0) by a central stalk formed by the gamma and epsilon chains, while a peripheral stalk is formed by the delta and b chains.

It localises to the cell membrane. Functionally, f(1)F(0) ATP synthase produces ATP from ADP in the presence of a proton or sodium gradient. F-type ATPases consist of two structural domains, F(1) containing the extramembraneous catalytic core and F(0) containing the membrane proton channel, linked together by a central stalk and a peripheral stalk. During catalysis, ATP synthesis in the catalytic domain of F(1) is coupled via a rotary mechanism of the central stalk subunits to proton translocation. Its function is as follows. This protein is part of the stalk that links CF(0) to CF(1). It either transmits conformational changes from CF(0) to CF(1) or is implicated in proton conduction. The chain is ATP synthase subunit delta from Bacillus cytotoxicus (strain DSM 22905 / CIP 110041 / 391-98 / NVH 391-98).